A 579-amino-acid chain; its full sequence is Fatty-acid amide hydrolase 1 (579 aa).

The helical transmembrane segment at 9–29 (ALSGLSGVCLACSLLSAAVVL) threads the bilayer. Residues 30-403 (RWTRSQTARG…GDFVDPCLGD (374 aa)) lie on the Cytoplasmic side of the membrane. The active-site Charge relay system is Lys-142. Substrate is bound by residues Met-191, Ser-217, and 238–241 (IGGS). Ser-217 acts as the Charge relay system in catalysis. The Acyl-ester intermediate role is filled by Ser-241. Residue Ser-241 is modified to Phosphoserine. The stretch at 404–433 (LVLVLKLPRWFKKLLSFLLKPLFPRLAAFL) is an intramembrane region. At 434-579 (NSMCPRSAEK…RLMTPEKRPS (146 aa)) the chain is on the cytoplasmic side.

It belongs to the amidase family. As to quaternary structure, homodimer.

It is found in the endoplasmic reticulum membrane. The protein localises to the golgi apparatus membrane. It carries out the reaction N-(5Z,8Z,11Z,14Z-eicosatetraenoyl)-ethanolamine + H2O = ethanolamine + (5Z,8Z,11Z,14Z)-eicosatetraenoate. The catalysed reaction is (9Z)-octadecenamide + H2O = (9Z)-octadecenoate + NH4(+). It catalyses the reaction 2-(5Z,8Z,11Z,14Z-eicosatetraenoyl)-glycerol + H2O = glycerol + (5Z,8Z,11Z,14Z)-eicosatetraenoate + H(+). The enzyme catalyses N-(9Z-hexadecenoyl) ethanolamine + H2O = (9Z)-hexadecenoate + ethanolamine. It carries out the reaction N-(9Z-octadecenoyl) ethanolamine + H2O = ethanolamine + (9Z)-octadecenoate. The catalysed reaction is N-octadecanoyl ethanolamine + H2O = octadecanoate + ethanolamine. It catalyses the reaction N-docosanoyl-ethanolamine + H2O = docosanoate + ethanolamine. The enzyme catalyses N-tetracosanoyl-taurine + H2O = tetracosanoate + taurine. It carries out the reaction N-(15Z-tetracosenoyl)-ethanolamine + H2O = (15Z)-tetracosenoate + ethanolamine. The catalysed reaction is N-(9Z-octadecenoyl)-taurine + H2O = taurine + (9Z)-octadecenoate. It catalyses the reaction N-docosanoyl-taurine + H2O = docosanoate + taurine. The enzyme catalyses N-(15Z-tetracosenoyl)-taurine + H2O = (15Z)-tetracosenoate + taurine. It carries out the reaction N-tricosanoyl-taurine + H2O = tricosanoate + taurine. The catalysed reaction is (9Z,12Z,15Z)-octadecatrienamide + H2O = (9Z,12Z,15Z)-octadecatrienoate + NH4(+). It catalyses the reaction (5Z,8Z,11Z,14Z)-eicosatetraenamide + H2O = (5Z,8Z,11Z,14Z)-eicosatetraenoate + NH4(+). The enzyme catalyses (6Z)-octadecenamide + H2O = (6Z)-octadecenoate + NH4(+). It carries out the reaction (15Z)-tetracosenamide + H2O = (15Z)-tetracosenoate + NH4(+). The catalysed reaction is (8Z,11Z,14Z)-eicosatrienamide + H2O = (8Z,11Z,14Z)-eicosatrienoate + NH4(+). It catalyses the reaction (11Z,14Z,17Z)-eicosatrienamide + H2O = (11Z,14Z,17Z)-eicosatrienoate + NH4(+). The enzyme catalyses (11Z,14Z)-eicosadienamide + H2O = (11Z,14Z)-eicosadienoate + NH4(+). It carries out the reaction (9Z,12Z)-octadecadienamide + H2O = (9Z,12Z)-octadecadienoate + NH4(+). The catalysed reaction is tetradecamide + H2O = tetradecanoate + NH4(+). It catalyses the reaction 1-O-methyl-(5Z,8Z,11Z,14Z)-eicosatetraenoate + H2O = methanol + (5Z,8Z,11Z,14Z)-eicosatetraenoate + H(+). The enzyme catalyses (11Z)-eicosenamide + H2O = (11Z)-eicosenoate + NH4(+). It carries out the reaction (9Z)-octadecenoate + glycine = N-(9Z-octadecenoyl)glycine + H2O. The catalysed reaction is N-(5Z,8Z,11Z,14Z)-eicosatetraenoyl-glycine + H2O = (5Z,8Z,11Z,14Z)-eicosatetraenoate + glycine. It catalyses the reaction N-(5Z,8Z,11Z,14Z-eicosatetraenoyl)-L-serine + H2O = (5Z,8Z,11Z,14Z)-eicosatetraenoate + L-serine. Inhibited the trifluoromethyl compound PF-3845. Catalyzes the hydrolysis of endogenous amidated lipids like the endocannabinoid anandamide (N-(5Z,8Z,11Z,14Z-eicosatetraenoyl)-ethanolamine), as well as other fatty amides such as the taurine-conjugated fatty acids (a structural class of central nervous system (CNS) metabolites), to their corresponding fatty acids, thereby regulating the signaling functions of these molecules. FAAH cooperates with PM20D1 in the hydrolysis of amino acid-conjugated fatty acids such as N-fatty acyl glycine and N-fatty acyl-L-serine, thereby acting as a physiological regulator of specific subsets of intracellular, but not of extracellular, N-fatty acyl amino acids. It can also catalyze the hydrolysis of the endocannabinoid 2-arachidonoylglycerol (2-(5Z,8Z,11Z,14Z-eicosatetraenoyl)-glycerol). The polypeptide is Fatty-acid amide hydrolase 1 (Faah) (Mus musculus (Mouse)).